The sequence spans 485 residues: Velvet complex subunit B (485 aa).

In terms of domain architecture, Velvet spans 33–459 (GRKHYSLEVV…GNQGQKLPLA (427 aa)). Residues 107–353 (VLHPSSVDRH…PPPPRHTYTR (247 aa)) are disordered. 4 stretches are compositionally biased toward polar residues: residues 134–155 (APQS…TLSQ), 234–243 (RSPSSSTSDH), 267–304 (SISS…SPHS), and 326–341 (THSQ…QHVS).

This sequence belongs to the velvet family. VelB subfamily. Component of the heterotrimeric velvet complex composed of laeA, veA and velB; VeA acting as a bridging protein between laeA and velB. Forms a heterodimeric complex with vosA; the formation of the velB-vosA complex is light-dependent.

It localises to the nucleus. The protein resides in the cytoplasm. Functionally, component of the velvet transcription factor complex that controls sexual/asexual developmental ratio in response to light, promoting sexual development in the darkness while stimulating asexual sporulation under illumination. The velvet complex acts as a global regulator for secondary metabolite gene expression. Component of the velB-VosA heterodimeric complex that plays a dual role in activating genes associated with spore maturation and repressing certain development-associated genes. The velB-VosA complex binds DNA through the DNA-binding domain of vosA that recognizes an 11-nucleotide consensus sequence 5'-CTGGCCGCGGC-3' consisting of two motifs in the promoters of key developmental regulatory genes. The chain is Velvet complex subunit B from Laccaria bicolor (strain S238N-H82 / ATCC MYA-4686) (Bicoloured deceiver).